A 372-amino-acid polypeptide reads, in one-letter code: Queuine tRNA-ribosyltransferase (372 aa).

Aspartate 89 (proton acceptor) is an active-site residue. Residues 89–93 (DSGGF), aspartate 161, and glycine 232 contribute to the substrate site. Positions 262-268 (GIGDLPS) are RNA binding. Aspartate 281 (nucleophile) is an active-site residue. Positions 286-290 (TKAAR) are RNA binding; important for wobble base 34 recognition. Residues cysteine 319, cysteine 321, cysteine 324, and histidine 351 each contribute to the Zn(2+) site.

Belongs to the queuine tRNA-ribosyltransferase family. As to quaternary structure, homodimer. Within each dimer, one monomer is responsible for RNA recognition and catalysis, while the other monomer binds to the replacement base PreQ1. Zn(2+) serves as cofactor.

It catalyses the reaction 7-aminomethyl-7-carbaguanine + guanosine(34) in tRNA = 7-aminomethyl-7-carbaguanosine(34) in tRNA + guanine. The protein operates within tRNA modification; tRNA-queuosine biosynthesis. Its function is as follows. Catalyzes the base-exchange of a guanine (G) residue with the queuine precursor 7-aminomethyl-7-deazaguanine (PreQ1) at position 34 (anticodon wobble position) in tRNAs with GU(N) anticodons (tRNA-Asp, -Asn, -His and -Tyr). Catalysis occurs through a double-displacement mechanism. The nucleophile active site attacks the C1' of nucleotide 34 to detach the guanine base from the RNA, forming a covalent enzyme-RNA intermediate. The proton acceptor active site deprotonates the incoming PreQ1, allowing a nucleophilic attack on the C1' of the ribose to form the product. After dissociation, two additional enzymatic reactions on the tRNA convert PreQ1 to queuine (Q), resulting in the hypermodified nucleoside queuosine (7-(((4,5-cis-dihydroxy-2-cyclopenten-1-yl)amino)methyl)-7-deazaguanosine). This is Queuine tRNA-ribosyltransferase from Chlamydia abortus (strain DSM 27085 / S26/3) (Chlamydophila abortus).